Here is a 75-residue protein sequence, read N- to C-terminus: ATP synthase subunit c (75 aa).

2 helical membrane passes run 9-29 (IGAG…GIIF) and 54-74 (FALA…ILFA).

This sequence belongs to the ATPase C chain family. As to quaternary structure, F-type ATPases have 2 components, F(1) - the catalytic core - and F(0) - the membrane proton channel. F(1) has five subunits: alpha(3), beta(3), gamma(1), delta(1), epsilon(1). F(0) has three main subunits: a(1), b(2) and c(10-14). The alpha and beta chains form an alternating ring which encloses part of the gamma chain. F(1) is attached to F(0) by a central stalk formed by the gamma and epsilon chains, while a peripheral stalk is formed by the delta and b chains.

It is found in the cell inner membrane. Functionally, f(1)F(0) ATP synthase produces ATP from ADP in the presence of a proton or sodium gradient. F-type ATPases consist of two structural domains, F(1) containing the extramembraneous catalytic core and F(0) containing the membrane proton channel, linked together by a central stalk and a peripheral stalk. During catalysis, ATP synthesis in the catalytic domain of F(1) is coupled via a rotary mechanism of the central stalk subunits to proton translocation. Its function is as follows. Key component of the F(0) channel; it plays a direct role in translocation across the membrane. A homomeric c-ring of between 10-14 subunits forms the central stalk rotor element with the F(1) delta and epsilon subunits. This chain is ATP synthase subunit c, found in Pelagibacter ubique (strain HTCC1062).